A 585-amino-acid polypeptide reads, in one-letter code: Butyrophilin subfamily 3 member A3 (585 aa).

A signal peptide spans 1-29; it reads MKMASSLACLLLNFHVSVFLVQLLTPCSA. Ig-like V-type domains follow at residues 30 to 139 and 145 to 236; these read QFSV…KALV and ALGS…ASIS. At 30–248 the chain is on the extracellular side; sequence QFSVLGPSGP…DPFFTSAQPW (219 aa). 2 disulfide bridges follow: Cys-52–Cys-126 and Cys-166–Cys-220. The N-linked (GlcNAc...) asparagine glycan is linked to Asn-115. A helical membrane pass occupies residues 249–269; that stretch reads IAALAGTLPISLLLLAGASYF. Residues 270-585 are Cytoplasmic-facing; sequence LWRQQKEKIA…KPQACTEALY (316 aa). The 197-residue stretch at 322 to 518 folds into the B30.2/SPRY domain; sequence RGEKSLAYHE…LTICPTPKEV (197 aa). Positions 560–585 are disordered; it reads AGAEGVSPSTTTSQNHKPQACTEALY. Polar residues predominate over residues 566–576; that stretch reads SPSTTTSQNHK.

Belongs to the immunoglobulin superfamily. BTN/MOG family.

Its subcellular location is the membrane. This is Butyrophilin subfamily 3 member A3 (BTN3A3) from Pongo abelii (Sumatran orangutan).